Here is a 116-residue protein sequence, read N- to C-terminus: uncharacterized protein (116 aa).

A helical membrane pass occupies residues 22-42 (LIFLVVNLKVPAVGLELFLLV).

It localises to the membrane. This is an uncharacterized protein from Saccharomyces cerevisiae (strain ATCC 204508 / S288c) (Baker's yeast).